Consider the following 101-residue polypeptide: NADH-quinone oxidoreductase subunit K (101 aa).

Transmembrane regions (helical) follow at residues 4–24, 30–50, and 61–81; these read LAHF…GIFL, IVLL…FVAF, and VFVF…LAIL.

This sequence belongs to the complex I subunit 4L family. NDH-1 is composed of 14 different subunits. Subunits NuoA, H, J, K, L, M, N constitute the membrane sector of the complex.

The protein resides in the cell inner membrane. It catalyses the reaction a quinone + NADH + 5 H(+)(in) = a quinol + NAD(+) + 4 H(+)(out). Functionally, NDH-1 shuttles electrons from NADH, via FMN and iron-sulfur (Fe-S) centers, to quinones in the respiratory chain. The immediate electron acceptor for the enzyme in this species is believed to be ubiquinone. Couples the redox reaction to proton translocation (for every two electrons transferred, four hydrogen ions are translocated across the cytoplasmic membrane), and thus conserves the redox energy in a proton gradient. This is NADH-quinone oxidoreductase subunit K from Cupriavidus taiwanensis (strain DSM 17343 / BCRC 17206 / CCUG 44338 / CIP 107171 / LMG 19424 / R1) (Ralstonia taiwanensis (strain LMG 19424)).